Here is a 156-residue protein sequence, read N- to C-terminus: Melatonin receptor type 1A (156 aa).

3 helical membrane-spanning segments follow: residues leucine 19 to threonine 39, threonine 62 to leucine 82, and phenylalanine 115 to valine 135.

The protein belongs to the G-protein coupled receptor 1 family. At least in the brain, more precisely in the pars tuberalis and the suprachiasmatic nucleus.

The protein resides in the cell membrane. Functionally, high affinity receptor for melatonin. Likely to mediate the reproductive and circadian actions of melatonin. The activity of this receptor is mediated by pertussis toxin sensitive G proteins that inhibit adenylate cyclase activity. Possibly involved in sleep induction, by melatonin activation of the potassium channel KCNMA1/BK and the dissociation of G-beta and G-gamma subunits, thereby decreasing synaptic transmission. The polypeptide is Melatonin receptor type 1A (Mtnr1a) (Rattus norvegicus (Rat)).